The sequence spans 483 residues: SWI/SNF-related matrix-associated actin-dependent regulator of chromatin subfamily D member 3 (483 aa).

Ala2 carries the N-acetylalanine modification. A disordered region spans residues 27–102; the sequence is RPGMPSGARM…ARSRSAKRRK (76 aa). Positions 78–88 are enriched in low complexity; that stretch reads QSQAQGQGQPV. Ser178 is subject to Phosphoserine. An SWIB/MDM2 domain is found at 258–335; sequence YQPPQFKLDP…PQRLTALLLP (78 aa).

The protein belongs to the SMARCD family. As to quaternary structure, component of the multiprotein chromatin-remodeling complexes SWI/SNF: SWI/SNF-A (BAF), SWI/SNF-B (PBAF) and related complexes. The canonical complex contains a catalytic subunit (either SMARCA4/BRG1/BAF190A or SMARCA2/BRM/BAF190B) and at least SMARCE1, ACTL6A/BAF53, SMARCC1/BAF155, SMARCC2/BAF170, and SMARCB1/SNF5/BAF47. Other subunits specific to each of the complexes may also be present permitting several possible combinations developmentally and tissue specific. Component of the BAF complex, which includes at least actin (ACTB), ARID1A/BAF250A, ARID1B/BAF250B, SMARCA2/BRM, SMARCA4/BRG1/BAF190A, ACTL6A/BAF53, ACTL6B/BAF53B, SMARCE1/BAF57, SMARCC1/BAF155, SMARCC2/BAF170, SMARCB1/SNF5/INI1, and one or more SMARCD1/BAF60A, SMARCD2/BAF60B, or SMARCD3/BAF60C. In muscle cells, the BAF complex also contains DPF3. Component of neural progenitors-specific chromatin remodeling complex (npBAF complex) composed of at least, ARID1A/BAF250A or ARID1B/BAF250B, SMARCD1/BAF60A, SMARCD3/BAF60C, SMARCA2/BRM/BAF190B, SMARCA4/BRG1/BAF190A, SMARCB1/BAF47, SMARCC1/BAF155, SMARCE1/BAF57, SMARCC2/BAF170, PHF10/BAF45A, ACTL6A/BAF53A and actin. Component of neuron-specific chromatin remodeling complex (nBAF complex) composed of at least, ARID1A/BAF250A or ARID1B/BAF250B, SMARCD1/BAF60A, SMARCD3/BAF60C, SMARCA2/BRM/BAF190B, SMARCA4/BRG1/BAF190A, SMARCB1/BAF47, SMARCC1/BAF155, SMARCE1/BAF57, SMARCC2/BAF170, DPF1/BAF45B, DPF3/BAF45C, ACTL6B/BAF53B and actin. May be a component of the SWI/SNF-B (PBAF) chromatin remodeling complex, at least composed of SMARCA4/BRG1, SMARCB1/BAF47/SNF5, ACTL6A/BAF53A or ACTL6B/BAF53B, SMARCE1/BAF57, SMARCD1/BAF60A, SMARCD2/BAF60B, perhaps SMARCD3/BAF60C, SMARCC1/BAF155, SMARCC2/BAF170, PBRM1/BAF180, ARID2/BAF200 and actin. Component of SWI/SNF (GBAF) subcomplex, which includes at least BICRA or BICRAL (mutually exclusive), BRD9, SS18, SMARCA2/BRM, SMARCA4/BRG1/BAF190A, ACTL6A/BAF53, SMARCC1/BAF155, and SMARCD1/BAF60A. Interacts with SMARCA4/BRG1/BAF190A. The precise distribution of the related SMARCD1, SMARCD2 and SMARCD3 proteins among these and other SWI/SNF nucleosome-remodeling complexes is not fully known. May allow recruitment of SWI/SNF containing complexes specifically to promoters where these factors are located. Also interacts with several nuclear receptors including PPARG/NR1C3, RXRA/NR1F1, ESR1, NR5A1, NR5A2/LRH1 and other transcriptional activators including the HLH protein SREBF1/SREBP1 and the homeobox protein PBX1. Interacts with PRDM1/BLIMP1. As to expression, ubiquitously expressed.

The protein resides in the nucleus. Its function is as follows. Involved in transcriptional activation and repression of select genes by chromatin remodeling (alteration of DNA-nucleosome topology). Component of SWI/SNF chromatin remodeling complexes that carry out key enzymatic activities, changing chromatin structure by altering DNA-histone contacts within a nucleosome in an ATP-dependent manner. Stimulates nuclear receptor mediated transcription. Belongs to the neural progenitors-specific chromatin remodeling complex (npBAF complex) and the neuron-specific chromatin remodeling complex (nBAF complex). During neural development a switch from a stem/progenitor to a postmitotic chromatin remodeling mechanism occurs as neurons exit the cell cycle and become committed to their adult state. The transition from proliferating neural stem/progenitor cells to postmitotic neurons requires a switch in subunit composition of the npBAF and nBAF complexes. As neural progenitors exit mitosis and differentiate into neurons, npBAF complexes which contain ACTL6A/BAF53A and PHF10/BAF45A, are exchanged for homologous alternative ACTL6B/BAF53B and DPF1/BAF45B or DPF3/BAF45C subunits in neuron-specific complexes (nBAF). The npBAF complex is essential for the self-renewal/proliferative capacity of the multipotent neural stem cells. The nBAF complex along with CREST plays a role regulating the activity of genes essential for dendrite growth. The polypeptide is SWI/SNF-related matrix-associated actin-dependent regulator of chromatin subfamily D member 3 (Smarcd3) (Mus musculus (Mouse)).